Consider the following 429-residue polypeptide: Proton/sodium-glutamate symport protein (429 aa).

Over 1 to 5 the chain is Cytoplasmic; that stretch reads MKRIK. A helical transmembrane segment spans residues 6-26; it reads FGLATQIFVGLILGVIVGVIW. Topologically, residues 27–45 are extracellular; the sequence is YGNPALPTYLQPIGDLFLR. Residues 46–66 traverse the membrane as a helical segment; the sequence is LIKMIVIPIVVSSLIIGVAGA. At 67–79 the chain is on the cytoplasmic side; that stretch reads GNGKQVGKLGFRT. A helical transmembrane segment spans residues 80–100; it reads ILYFEIITTFAIILGLALANI. The Extracellular portion of the chain corresponds to 101–150; that stretch reads FHPGTGVNIHEAQKSDISQYVETEKEQSNKSVAETFLHIVPTNFFQSLVE. The helical transmembrane segment at 151–171 threads the bilayer; that stretch reads GDLLAIICFTVLFALGISAIG. Over 172 to 190 the chain is Cytoplasmic; that stretch reads ERGKPVLAFFEGVSHAMFH. Residues 191 to 211 traverse the membrane as a helical segment; sequence VVNLVMKVAPFGVFALIGVTV. Residues 212 to 224 are Extracellular-facing; sequence SKFGLGSLISLGK. A helical transmembrane segment spans residues 225–245; the sequence is LVGLVYVALAFFLIVIFGIVA. Residue lysine 246 is a topological domain, cytoplasmic. The chain crosses the membrane as a helical span at residues 247 to 267; it reads IAGISIFKFLAYMKDEILLAF. The Extracellular segment spans residues 268-290; it reads STSSSETVLPRIMEKMEKIGCPK. The chain crosses the membrane as a helical span at residues 291 to 311; sequence GIVSFVIPIGYTFNLDGSVLY. The Cytoplasmic portion of the chain corresponds to 312-321; that stretch reads QSIAALFLAQ. Residues 322 to 342 traverse the membrane as a helical segment; that stretch reads VYGIDLTIWHQITLVLVLMVT. Topologically, residues 343-353 are extracellular; that stretch reads SKGMAAVPGTS. Residues 354-374 form a helical membrane-spanning segment; it reads FVVLLATLGTIGVPAEGLAFI. The Cytoplasmic portion of the chain corresponds to 375 to 429; sequence AGVDRIMDMARTVVNLTGNALAAVVMSKWEGMFNPAKAETVMSQSKTEQNATISG.

It belongs to the dicarboxylate/amino acid:cation symporter (DAACS) (TC 2.A.23) family. Homotrimer. Interacts with FloT.

It localises to the cell membrane. Its subcellular location is the membrane raft. Its function is as follows. This carrier protein is part of the Na(+)-dependent, binding-protein-independent glutamate-aspartate transport system. This chain is Proton/sodium-glutamate symport protein (gltT), found in Bacillus subtilis (strain 168).